The chain runs to 892 residues: DNA mismatch repair protein MutS (892 aa).

An ATP-binding site is contributed by 607-614; the sequence is GPNMSGKS.

It belongs to the DNA mismatch repair MutS family.

This protein is involved in the repair of mismatches in DNA. It is possible that it carries out the mismatch recognition step. This protein has a weak ATPase activity. This is DNA mismatch repair protein MutS from Bacillus cereus (strain G9842).